Reading from the N-terminus, the 148-residue chain is MFRRPVVQVLRQFVRHESEVASSLVLERSLNRVQLLGRVGQDPVMRQVEGKNPDTIFSLATNEMWRSGENETYQMGDVSQKTTWHRISVFRPGLRDVAYQYVKKGSRIYVEGKVDYGEYTDKNNVRRQATTIIADNIIFLSDQIKEKP.

The transit peptide at 1–16 (MFRRPVVQVLRQFVRH) directs the protein to the mitochondrion. The SSB domain occupies 30–141 (LNRVQLLGRV…IIADNIIFLS (112 aa)). Residues serine 67 and serine 79 each carry the phosphoserine modification. Lysine 113 is subject to N6-acetyllysine. Position 122 is an N6-succinyllysine (lysine 122).

In terms of assembly, homotetramer. Interacts with MPG/AAG, through inhibition of its glycosylase activity it potentially prevents formation of DNA breaks in ssDNA, ensuring that base removal primarily occurs in dsDNA. Interacts with POLDIP2. Interacts with PRIMPOL.

The protein localises to the mitochondrion. Its subcellular location is the mitochondrion matrix. It localises to the mitochondrion nucleoid. Functionally, binds preferentially and cooperatively to pyrimidine rich single-stranded DNA (ss-DNA). In vitro, required to maintain the copy number of mitochondrial DNA (mtDNA) and plays a crucial role during mtDNA replication by stimulating the activity of the replisome components POLG and TWNK at the replication fork. Promotes the activity of the gamma complex polymerase POLG, largely by organizing the template DNA and eliminating secondary structures to favor ss-DNA conformations that facilitate POLG activity. In addition it is able to promote the 5'-3' unwinding activity of the mtDNA helicase TWNK. May also function in mtDNA repair. The polypeptide is Single-stranded DNA-binding protein, mitochondrial (SSBP1) (Bos taurus (Bovine)).